Reading from the N-terminus, the 474-residue chain is Methylenetetrahydrofolate--tRNA-(uracil-5-)-methyltransferase TrmFO (474 aa).

Residue 13 to 18 (GGGLAG) coordinates FAD.

The protein belongs to the MnmG family. TrmFO subfamily. The cofactor is FAD.

It localises to the cytoplasm. The enzyme catalyses uridine(54) in tRNA + (6R)-5,10-methylene-5,6,7,8-tetrahydrofolate + NADH + H(+) = 5-methyluridine(54) in tRNA + (6S)-5,6,7,8-tetrahydrofolate + NAD(+). It catalyses the reaction uridine(54) in tRNA + (6R)-5,10-methylene-5,6,7,8-tetrahydrofolate + NADPH + H(+) = 5-methyluridine(54) in tRNA + (6S)-5,6,7,8-tetrahydrofolate + NADP(+). In terms of biological role, catalyzes the folate-dependent formation of 5-methyl-uridine at position 54 (M-5-U54) in all tRNAs. The polypeptide is Methylenetetrahydrofolate--tRNA-(uracil-5-)-methyltransferase TrmFO (Bartonella tribocorum (strain CIP 105476 / IBS 506)).